The chain runs to 668 residues: Metastasis-associated protein MTA2 (668 aa).

Residues 1-144 (MAANMYRVGD…PVQKTLLADQ (144 aa)) form the BAH domain. Residues Ser-52 and Ser-54 each carry the phosphoserine modification. Positions 145–256 (GEIRVGCKYQ…KAMSTLVPQG (112 aa)) constitute an ELM2 domain. N6-acetyllysine is present on Lys-152. One can recognise an SANT domain in the interval 263–315 (DEMEEWSASEAMLFEEALEKYGKDFNDIRQDFLPWKSLASIVQFYYMWKTTDR). The segment at 367–394 (CESCHTTQSAQWYAWGPPNMQCRLCASC) adopts a GATA-type; atypical zinc-finger fold. Polar residues predominate over residues 409–419 (QLEGATRGTTE). The segment at 409-437 (QLEGATRGTTEPHSRGHLSRPEAQSLSPY) is disordered. Phosphoserine is present on residues Ser-433 and Ser-435. Lys-460 carries the N6-acetyllysine modification. Residue Lys-492 forms a Glycyl lysine isopeptide (Lys-Gly) (interchain with G-Cter in SUMO2 and SUMO3); alternate linkage. A Glycyl lysine isopeptide (Lys-Gly) (interchain with G-Cter in SUMO2); alternate cross-link involves residue Lys-492. A Glycyl lysine isopeptide (Lys-Gly) (interchain with G-Cter in SUMO2) cross-link involves residue Lys-508. N6-acetyllysine occurs at positions 522 and 531. Residue Thr-534 is modified to Phosphothreonine. The residue at position 548 (Ser-548) is a Phosphoserine. Glycyl lysine isopeptide (Lys-Gly) (interchain with G-Cter in SUMO2) cross-links involve residues Lys-559 and Lys-595. Disordered stretches follow at residues 580 to 599 (ASGI…LNPA) and 647 to 668 (PPVP…VLED).

It belongs to the metastasis-associated protein family. As to quaternary structure, component of the nucleosome remodeling and deacetylase (NuRD) repressor complex, composed of core proteins MTA1, MTA2, MTA3, RBBP4, RBBP7, HDAC1, HDAC2, MBD2, MBD3, and peripherally associated proteins CDK2AP1, CDK2AP2, GATAD2A, GATAD2B, CHD3, CHD4 and CHD5. The exact stoichiometry of the NuRD complex is unknown, and some subunits such as MBD2 and MBD3, GATAD2A and GATAD2B, and CHD3, CHD4 and CHD5 define mutually exclusive NuRD complexes. Interacts with CHD3. Interacts with CHD4. Interacts with GATAD2A. Interacts with HDAC7. Interacts with MBD3. Interacts with p53/TP53. Interacts with MINT. Interacts with PIMREG. Interacts with NACC2. Interacts with ERCC6. Interacts with PWWP2B. Interacts with transcription factor BCL11A. Widely expressed.

It is found in the nucleus. May function as a transcriptional coregulator. Acts as a component of the histone deacetylase NuRD complex which participates in the remodeling of chromatin. In Homo sapiens (Human), this protein is Metastasis-associated protein MTA2 (MTA2).